A 464-amino-acid polypeptide reads, in one-letter code: tRNA modification GTPase MnmE (464 aa).

Positions 28, 90, and 129 each coordinate (6S)-5-formyl-5,6,7,8-tetrahydrofolate. A TrmE-type G domain is found at 226–385; the sequence is GLATAIVGRP…LEEKIAELFF (160 aa). Asn-236 serves as a coordination point for K(+). GTP is bound by residues 236–241, 255–261, and 280–283; these read NVGKSS, TDIAGTT, and DTAG. Residue Ser-240 participates in Mg(2+) binding. Positions 255, 257, and 260 each coordinate K(+). A Mg(2+)-binding site is contributed by Thr-261. Lys-464 is a (6S)-5-formyl-5,6,7,8-tetrahydrofolate binding site.

It belongs to the TRAFAC class TrmE-Era-EngA-EngB-Septin-like GTPase superfamily. TrmE GTPase family. Homodimer. Heterotetramer of two MnmE and two MnmG subunits. Requires K(+) as cofactor.

It is found in the cytoplasm. Its function is as follows. Exhibits a very high intrinsic GTPase hydrolysis rate. Involved in the addition of a carboxymethylaminomethyl (cmnm) group at the wobble position (U34) of certain tRNAs, forming tRNA-cmnm(5)s(2)U34. The sequence is that of tRNA modification GTPase MnmE from Ligilactobacillus salivarius (strain UCC118) (Lactobacillus salivarius).